A 906-amino-acid chain; its full sequence is Protein translocase subunit SecA (906 aa).

ATP contacts are provided by residues Gln86, Gly104 to Thr108, and Asp499. Residues Val865–Ser885 form a disordered region. Cys890, Cys892, Cys901, and His902 together coordinate Zn(2+).

The protein belongs to the SecA family. In terms of assembly, monomer and homodimer. Part of the essential Sec protein translocation apparatus which comprises SecA, SecYEG and auxiliary proteins SecDF-YajC and YidC. Zn(2+) serves as cofactor.

The protein localises to the cell inner membrane. It is found in the cytoplasm. The catalysed reaction is ATP + H2O + cellular proteinSide 1 = ADP + phosphate + cellular proteinSide 2.. In terms of biological role, part of the Sec protein translocase complex. Interacts with the SecYEG preprotein conducting channel. Has a central role in coupling the hydrolysis of ATP to the transfer of proteins into and across the cell membrane, serving both as a receptor for the preprotein-SecB complex and as an ATP-driven molecular motor driving the stepwise translocation of polypeptide chains across the membrane. This is Protein translocase subunit SecA from Rickettsia canadensis (strain McKiel).